The sequence spans 454 residues: Bifunctional protein GlmU (454 aa).

The pyrophosphorylase stretch occupies residues 1–226 (MTTTVIILAA…AFEVEGVNDR (226 aa)). Residues 8 to 11 (LAAG), K22, Q73, 78 to 79 (GT), 100 to 102 (YGD), G137, E151, N166, and N224 each bind UDP-N-acetyl-alpha-D-glucosamine. D102 serves as a coordination point for Mg(2+). N224 contributes to the Mg(2+) binding site. Residues 227 to 247 (LQLAALEREFQLQQAKSLMQQ) are linker. The interval 248-454 (GVTLTDPSRF…NYQRPQKLKK (207 aa)) is N-acetyltransferase. Residues R330 and K348 each coordinate UDP-N-acetyl-alpha-D-glucosamine. H360 serves as the catalytic Proton acceptor. UDP-N-acetyl-alpha-D-glucosamine-binding residues include Y363 and N374. Residues A377, 383 to 384 (NY), S402, A420, and R437 contribute to the acetyl-CoA site.

It in the N-terminal section; belongs to the N-acetylglucosamine-1-phosphate uridyltransferase family. This sequence in the C-terminal section; belongs to the transferase hexapeptide repeat family. As to quaternary structure, homotrimer. The cofactor is Mg(2+).

Its subcellular location is the cytoplasm. It carries out the reaction alpha-D-glucosamine 1-phosphate + acetyl-CoA = N-acetyl-alpha-D-glucosamine 1-phosphate + CoA + H(+). The catalysed reaction is N-acetyl-alpha-D-glucosamine 1-phosphate + UTP + H(+) = UDP-N-acetyl-alpha-D-glucosamine + diphosphate. The protein operates within nucleotide-sugar biosynthesis; UDP-N-acetyl-alpha-D-glucosamine biosynthesis; N-acetyl-alpha-D-glucosamine 1-phosphate from alpha-D-glucosamine 6-phosphate (route II): step 2/2. It functions in the pathway nucleotide-sugar biosynthesis; UDP-N-acetyl-alpha-D-glucosamine biosynthesis; UDP-N-acetyl-alpha-D-glucosamine from N-acetyl-alpha-D-glucosamine 1-phosphate: step 1/1. It participates in bacterial outer membrane biogenesis; LPS lipid A biosynthesis. Functionally, catalyzes the last two sequential reactions in the de novo biosynthetic pathway for UDP-N-acetylglucosamine (UDP-GlcNAc). The C-terminal domain catalyzes the transfer of acetyl group from acetyl coenzyme A to glucosamine-1-phosphate (GlcN-1-P) to produce N-acetylglucosamine-1-phosphate (GlcNAc-1-P), which is converted into UDP-GlcNAc by the transfer of uridine 5-monophosphate (from uridine 5-triphosphate), a reaction catalyzed by the N-terminal domain. This is Bifunctional protein GlmU from Acinetobacter baylyi (strain ATCC 33305 / BD413 / ADP1).